The sequence spans 149 residues: Transcriptional regulator MraZ (149 aa).

2 SpoVT-AbrB domains span residues 7-54 (KYVN…GISH) and 83-126 (ALQL…QPQN).

It belongs to the MraZ family. As to quaternary structure, forms oligomers.

Its subcellular location is the cytoplasm. The protein localises to the nucleoid. This Rickettsia canadensis (strain McKiel) protein is Transcriptional regulator MraZ.